A 154-amino-acid polypeptide reads, in one-letter code: Myoglobin (154 aa).

Positions 2 to 148 (GLSDAEWQLV…FRNDIAAKYK (147 aa)) constitute a Globin domain. Ser-4 is modified (phosphoserine). A nitrite-binding site is contributed by His-65. Residue His-65 coordinates O2. At Thr-68 the chain carries Phosphothreonine. Residue His-94 coordinates heme b.

This sequence belongs to the globin family. As to quaternary structure, monomeric.

It is found in the cytoplasm. It localises to the sarcoplasm. The enzyme catalyses Fe(III)-heme b-[protein] + nitric oxide + H2O = Fe(II)-heme b-[protein] + nitrite + 2 H(+). The catalysed reaction is H2O2 + AH2 = A + 2 H2O. Functionally, monomeric heme protein which primary function is to store oxygen and facilitate its diffusion within muscle tissues. Reversibly binds oxygen through a pentacoordinated heme iron and enables its timely and efficient release as needed during periods of heightened demand. Depending on the oxidative conditions of tissues and cells, and in addition to its ability to bind oxygen, it also has a nitrite reductase activity whereby it regulates the production of bioactive nitric oxide. Under stress conditions, like hypoxia and anoxia, it also protects cells against reactive oxygen species thanks to its pseudoperoxidase activity. The polypeptide is Myoglobin (MB) (Orycteropus afer (Aardvark)).